The primary structure comprises 723 residues: Epidermal growth factor receptor kinase substrate 8-like protein 1 (723 aa).

The PTB domain maps to 35-164 (QYPVNHLVTF…LHNYRSGRGE (130 aa)). Residues 162 to 183 (RGERRAAALRATQEELQRDRSP) show a composition bias toward basic and acidic residues. Disordered regions lie at residues 162–247 (RGER…PRGP), 442–477 (KQLQ…LESE), 537–589 (GPRL…GLDP), and 609–636 (LAQG…GSDA). At Ser182 the chain carries Phosphoserine. A Phosphothreonine modification is found at Thr187. Residues 478–537 (TAGKWVLCNYDFQARNSSELSVKQRDVLEVLDDSRKWWKVRDPAGQEGYVPYNILTPYPG) enclose the SH3 domain. Over residues 543–552 (SQSPARSLNS) the composition is skewed to polar residues. Pro residues predominate over residues 553 to 568 (TPPPPPAPAPAPPPAL). The segment covering 571 to 580 (PRWDRPRWDS) has biased composition (basic and acidic residues). Residues 689-719 (VQRSLLEDKEKVSELEAVMEKQKKKVEGEVE) adopt a coiled-coil conformation.

It belongs to the EPS8 family. As to quaternary structure, interacts with ABI1. Part of a complex that contains SOS1, ABI1 and EPS8L2. Associates with F-actin. As to expression, detected in placenta.

It localises to the cytoplasm. Its function is as follows. Stimulates guanine exchange activity of SOS1. May play a role in membrane ruffling and remodeling of the actin cytoskeleton. This is Epidermal growth factor receptor kinase substrate 8-like protein 1 (EPS8L1) from Homo sapiens (Human).